We begin with the raw amino-acid sequence, 333 residues long: DNA-directed RNA polymerase subunit alpha (333 aa).

Positions 1 to 234 (MQISVNEFLT…QQLAAFVDLK (234 aa)) are alpha N-terminal domain (alpha-NTD). The interval 248–333 (IDPILLRPVD…SLKKDDKATA (86 aa)) is alpha C-terminal domain (alpha-CTD).

This sequence belongs to the RNA polymerase alpha chain family. In terms of assembly, homodimer. The RNAP catalytic core consists of 2 alpha, 1 beta, 1 beta' and 1 omega subunit. When a sigma factor is associated with the core the holoenzyme is formed, which can initiate transcription.

It carries out the reaction RNA(n) + a ribonucleoside 5'-triphosphate = RNA(n+1) + diphosphate. Functionally, DNA-dependent RNA polymerase catalyzes the transcription of DNA into RNA using the four ribonucleoside triphosphates as substrates. The polypeptide is DNA-directed RNA polymerase subunit alpha (Pseudomonas fluorescens (strain ATCC BAA-477 / NRRL B-23932 / Pf-5)).